A 444-amino-acid polypeptide reads, in one-letter code: Gentisate transporter (444 aa).

12 helical membrane passes run 42–64 (AAVLIGWFFVIFDGYDLIVYGTV), 79–101 (LGTIGSTAFFGMAIGAVFIGRLS), 108–127 (AAVIGSVLILSVFTMLCAFA), 131–153 (WVFGAFRFIAGLGLGGLVPSVNA), 166–188 (AWATVMMSGVPIGGSIAAVLALV), 198–220 (WRFMFLIALIPLVVGLPIAMKVI), 252–274 (WISIWFALATFVTLLAWYGLGTW), 289–311 (ALMFTLALNLGAVIGSVVTAWAG), 318–340 (RSGVIAAGIAGIALLLLLTYPPV), 344–366 (YVILILAGVGTHGTQILIIAAVA), 378–400 (LGWALGVGRIGAVVAPQLAGLLL), and 410–428 (FIMFGTAALLSALALSVLL).

This sequence belongs to the major facilitator superfamily. Aromatic acid:H(+) symporter (AAHS) (TC 2.A.1.15) family.

It is found in the cell membrane. Transport of gentisate (2,5-dihydroxybenzoate) into the cell. Does not transport 3-hydroxybenzoate or benzoate. The polypeptide is Gentisate transporter (genK) (Corynebacterium glutamicum (strain ATCC 13032 / DSM 20300 / JCM 1318 / BCRC 11384 / CCUG 27702 / LMG 3730 / NBRC 12168 / NCIMB 10025 / NRRL B-2784 / 534)).